The following is a 557-amino-acid chain: Eukaryotic translation initiation factor 3 subunit D-2 (557 aa).

The RNA gate stretch occupies residues 292–306 (QFDMLTVNETALEPP). The interval 533–557 (FDSDNNDGEETSDDRPFLNSKDNKL) is disordered. Residues 545-557 (DDRPFLNSKDNKL) are compositionally biased toward basic and acidic residues.

It belongs to the eIF-3 subunit D family. As to quaternary structure, component of the eukaryotic translation initiation factor 3 (eIF-3) complex. The eIF-3 complex interacts with pix.

The protein localises to the cytoplasm. Functionally, mRNA cap-binding component of the eukaryotic translation initiation factor 3 (eIF-3) complex, which is involved in protein synthesis of a specialized repertoire of mRNAs and, together with other initiation factors, stimulates binding of mRNA and methionyl-tRNAi to the 40S ribosome. The eIF-3 complex specifically targets and initiates translation of a subset of mRNAs involved in cell proliferation. In the eIF-3 complex, eif3d specifically recognizes and binds the 7-methylguanosine cap of a subset of mRNAs. In Drosophila grimshawi (Hawaiian fruit fly), this protein is Eukaryotic translation initiation factor 3 subunit D-2.